We begin with the raw amino-acid sequence, 231 residues long: Probable amino-acid ABC transporter permease protein y4tG (231 aa).

6 consecutive transmembrane segments (helical) span residues 9 to 29 (TGNG…MGLI), 32 to 52 (LQAA…FAVL), 64 to 84 (AAVL…FFLY), 86 to 106 (VLPE…ALGI), 161 to 181 (YLVS…VEML), and 196 to 216 (VPLS…SALV). One can recognise an ABC transmembrane type-1 domain in the interval 28 to 217 (LITTLQAAFL…LTIVASALVR (190 aa)).

It belongs to the binding-protein-dependent transport system permease family. HisMQ subfamily.

Its subcellular location is the cell inner membrane. Functionally, probably part of the binding-protein-dependent transport system y4tEFGH for an amino acid. Probably responsible for the translocation of the substrate across the membrane. This Sinorhizobium fredii (strain NBRC 101917 / NGR234) protein is Probable amino-acid ABC transporter permease protein y4tG.